Reading from the N-terminus, the 680-residue chain is Methionine--tRNA ligase (680 aa).

The 'HIGH' region signature appears at 14–24; it reads PYANGPIHLGH. Residues Cys145, Cys148, Cys158, and Cys161 each contribute to the Zn(2+) site. The short motif at 330–334 is the 'KMSKS' region element; it reads KMSKS. An ATP-binding site is contributed by Lys333. In terms of domain architecture, tRNA-binding spans 579 to 680; that stretch reads DFAKVDFRIA…DGAQPGMRVK (102 aa).

It belongs to the class-I aminoacyl-tRNA synthetase family. MetG type 1 subfamily. Homodimer. Zn(2+) serves as cofactor.

The protein localises to the cytoplasm. It catalyses the reaction tRNA(Met) + L-methionine + ATP = L-methionyl-tRNA(Met) + AMP + diphosphate. In terms of biological role, is required not only for elongation of protein synthesis but also for the initiation of all mRNA translation through initiator tRNA(fMet) aminoacylation. This chain is Methionine--tRNA ligase, found in Hydrogenovibrio crunogenus (strain DSM 25203 / XCL-2) (Thiomicrospira crunogena).